We begin with the raw amino-acid sequence, 83 residues long: Hainantoxin-III 5 (83 aa).

Residues 1–21 (MKASRFLALAGLVLLFVVGYA) form the signal peptide. Residues 22–48 (SESEEKEFPRELLSKIFAVDDFKGEER) constitute a propeptide that is removed on maturation. Intrachain disulfides connect C50/C65, C57/C70, and C64/C77. L81 bears the Leucine amide mark.

Belongs to the neurotoxin 10 (Hwtx-1) family. 15 (Hntx-3) subfamily. As to quaternary structure, monomer. As to expression, expressed by the venom gland.

Its subcellular location is the secreted. Selective antagonist of neuronal tetrodotoxin (TTX)-sensitive voltage-gated sodium channels (IC(50)=1270 nM on Nav1.1/SCN1A, 270 nM on Nav1.2/SCN2A, 491 nM on Nav1.3/SCN3A and 232 nM on Nav1.7/SCN9A). This toxin suppress Nav1.7 current amplitude without significantly altering the activation, inactivation, and repriming kinetics. Short extreme depolarizations partially activate the toxin-bound channel, indicating voltage-dependent inhibition of this toxin. This toxin increases the deactivation of the Nav1.7 current after extreme depolarizations. The toxin-Nav1.7 complex is gradually dissociated upon prolonged strong depolarizations in a voltage-dependent manner, and the unbound toxin rebinds to Nav1.7 after a long repolarization. Moreover, analysis of chimeric channels showed that the DIIS3-S4 linker is critical for toxin binding to Nav1.7. These data are consistent with this toxin interacting with Nav1.7 site 4 and trapping the domain II voltage sensor in the closed state. The protein is Hainantoxin-III 5 of Cyriopagopus hainanus (Chinese bird spider).